Consider the following 208-residue polypeptide: Platelet-activating factor receptor (208 aa).

Residues 1-16 lie on the Extracellular side of the membrane; sequence MEPHDSSHVDSEFRYT. A helical membrane pass occupies residues 17–38; it reads LFPIVYSIIFVLGVIANGYVLW. Residues 39 to 54 are Cytoplasmic-facing; the sequence is VFARLYPSKKFNEIKI. A helical membrane pass occupies residues 55-74; that stretch reads FMVNLTMADMLFLITLPLWI. The Extracellular segment spans residues 75-91; sequence VYYQNGGNWIFPKFLCN. The cysteines at positions 90 and 173 are disulfide-linked. The chain crosses the membrane as a helical span at residues 92–113; sequence LAGCLFFINTYCSVAFLGVITY. At 114–133 the chain is on the cytoplasmic side; that stretch reads NRFQAVTRPIKTAQANTRKR. The helical transmembrane segment at 134 to 155 threads the bilayer; that stretch reads GISLSLVIWVAIVGAASYFFIL. Residues 156–184 lie on the Extracellular side of the membrane; it reads DSTNTVPNSAGSGNITRCFEHYEKGSVPV. N-linked (GlcNAc...) asparagine glycosylation is present at asparagine 169. A helical membrane pass occupies residues 185–205; that stretch reads LIIHIFIVFSFFLVFLIILFC. The Cytoplasmic segment spans residues 206–208; it reads NLV.

It belongs to the G-protein coupled receptor 1 family. In terms of assembly, interacts with ARRB1.

Its subcellular location is the cell membrane. In terms of biological role, receptor for platelet activating factor, a chemotactic phospholipid mediator that possesses potent inflammatory, smooth-muscle contractile and hypotensive activity. Seems to mediate its action via a G protein that activates a phosphatidylinositol-calcium second messenger system. The chain is Platelet-activating factor receptor (PTAFR) from Macaca mulatta (Rhesus macaque).